Reading from the N-terminus, the 299-residue chain is Tyrosine recombinase XerC (299 aa).

The region spanning 1-85 (MEQHLDAYCM…AVRGFYKYLN (85 aa)) is the Core-binding (CB) domain. Residues 106-285 (RLPKTLDTDR…DFQHLATVYD (180 aa)) form the Tyr recombinase domain. Residues Arg-146, Lys-170, His-237, Arg-240, and His-263 contribute to the active site. Catalysis depends on Tyr-272, which acts as the O-(3'-phospho-DNA)-tyrosine intermediate.

This sequence belongs to the 'phage' integrase family. XerC subfamily. Forms a cyclic heterotetrameric complex composed of two molecules of XerC and two molecules of XerD.

The protein resides in the cytoplasm. In terms of biological role, site-specific tyrosine recombinase, which acts by catalyzing the cutting and rejoining of the recombining DNA molecules. The XerC-XerD complex is essential to convert dimers of the bacterial chromosome into monomers to permit their segregation at cell division. It also contributes to the segregational stability of plasmids. This is Tyrosine recombinase XerC from Pseudomonas syringae pv. tomato (strain ATCC BAA-871 / DC3000).